Reading from the N-terminus, the 79-residue chain is U-scoloptoxin(15)-Sm1a (79 aa).

Residues 1–25 (MKMNVVVLSVVVLLLFIANIQQTEA) form the signal peptide.

This sequence belongs to the scoloptoxin-15 family. In terms of processing, contains 2 disulfide bonds. Expressed by the venom gland.

It localises to the secreted. The sequence is that of U-scoloptoxin(15)-Sm1a from Scolopendra morsitans (Tanzanian blue ringleg centipede).